Here is a 208-residue protein sequence, read N- to C-terminus: 3-demethoxyubiquinol 3-hydroxylase (208 aa).

Residues Glu57, Glu87, His90, Glu139, Glu171, and His174 each coordinate Fe cation.

It belongs to the COQ7 family. The cofactor is Fe cation.

It is found in the cell membrane. The enzyme catalyses a 5-methoxy-2-methyl-3-(all-trans-polyprenyl)benzene-1,4-diol + AH2 + O2 = a 3-demethylubiquinol + A + H2O. It functions in the pathway cofactor biosynthesis; ubiquinone biosynthesis. Catalyzes the hydroxylation of 2-nonaprenyl-3-methyl-6-methoxy-1,4-benzoquinol during ubiquinone biosynthesis. In Burkholderia cenocepacia (strain ATCC BAA-245 / DSM 16553 / LMG 16656 / NCTC 13227 / J2315 / CF5610) (Burkholderia cepacia (strain J2315)), this protein is 3-demethoxyubiquinol 3-hydroxylase.